Reading from the N-terminus, the 1172-residue chain is Pesticidal crystal protein Cry1Ha (1172 aa).

The protein belongs to the delta endotoxin family.

Promotes colloidosmotic lysis by binding to the midgut epithelial cells of insects. The protein is Pesticidal crystal protein Cry1Ha (cry1Ha) of Bacillus thuringiensis.